A 316-amino-acid polypeptide reads, in one-letter code: Ribose-phosphate pyrophosphokinase (316 aa).

ATP contacts are provided by residues Asp41–Glu43 and Arg100–Gln101. Mg(2+) is bound by residues His134 and Asp174. Residue Lys197 is part of the active site. Residues Arg199, Asp223, and Asp227–Thr231 contribute to the D-ribose 5-phosphate site.

This sequence belongs to the ribose-phosphate pyrophosphokinase family. Class I subfamily. Homohexamer. Mg(2+) is required as a cofactor.

It is found in the cytoplasm. It carries out the reaction D-ribose 5-phosphate + ATP = 5-phospho-alpha-D-ribose 1-diphosphate + AMP + H(+). Its pathway is metabolic intermediate biosynthesis; 5-phospho-alpha-D-ribose 1-diphosphate biosynthesis; 5-phospho-alpha-D-ribose 1-diphosphate from D-ribose 5-phosphate (route I): step 1/1. Involved in the biosynthesis of the central metabolite phospho-alpha-D-ribosyl-1-pyrophosphate (PRPP) via the transfer of pyrophosphoryl group from ATP to 1-hydroxyl of ribose-5-phosphate (Rib-5-P). The protein is Ribose-phosphate pyrophosphokinase of Caldanaerobacter subterraneus subsp. tengcongensis (strain DSM 15242 / JCM 11007 / NBRC 100824 / MB4) (Thermoanaerobacter tengcongensis).